A 439-amino-acid polypeptide reads, in one-letter code: Serine/threonine-protein kinase 2 (439 aa).

Positions 87-439 (NDDFYHISTG…IFSDWINGGN (353 aa)) constitute a Protein kinase domain. ATP is bound by residues 93–101 (ISTGGYGIV) and Lys117. Asp307 acts as the Proton acceptor in catalysis.

This sequence belongs to the protein kinase superfamily. Ser/Thr protein kinase family. In terms of processing, phosphorylated in vivo. Autophosphorylated in vitro.

It localises to the host endoplasmic reticulum. The protein localises to the host endoplasmic reticulum-Golgi intermediate compartment. It carries out the reaction L-seryl-[protein] + ATP = O-phospho-L-seryl-[protein] + ADP + H(+). The enzyme catalyses L-threonyl-[protein] + ATP = O-phospho-L-threonyl-[protein] + ADP + H(+). Functionally, essential serine-protein kinase involved in the early stage of virion morphogenesis. The protein is Serine/threonine-protein kinase 2 (OPG054) of Bos taurus (Bovine).